A 287-amino-acid polypeptide reads, in one-letter code: CRISPR-associated endoribonuclease Cas6 1 (287 aa).

It belongs to the CRISPR-associated endoribonuclease Cas6 family. Part of the aCascade ribonucleoprotein complex, minimally composed of Csa2 and Cas5a, which binds crRNA. Other possible components of aCascade in strain P1 are Cas6b (SSO1437) and Csa5 (SSO1443), while SSO1399, Cas5b (SSO1400) and SSO1401 have sometimes been seen weakly associated. Csa2 is probably the major RNA-binding subunit. The Csa2-Cas5a-crRNA complex also binds target DNA homologous to crRNA, probably forming an R-loop. Purified aCascade forms a filament about 6 nm in width.

Functionally, CRISPR (clustered regularly interspaced short palindromic repeat) is an adaptive immune system that provides protection against mobile genetic elements (viruses, transposable elements and conjugative plasmids). CRISPR clusters contain spacers, sequences complementary to antecedent mobile elements, and target invading nucleic acids. CRISPR clusters are transcribed and processed into CRISPR RNA (crRNA). This Saccharolobus solfataricus (strain ATCC 35092 / DSM 1617 / JCM 11322 / P2) (Sulfolobus solfataricus) protein is CRISPR-associated endoribonuclease Cas6 1 (cas6a).